The following is a 252-amino-acid chain: Ribonuclease HII (252 aa).

Residues 41–232 enclose the RNase H type-2 domain; it reads LLVAGVDEAG…VRLALEGREQ (192 aa). A divalent metal cation contacts are provided by Asp47, Glu48, and Asp140.

Belongs to the RNase HII family. Requires Mn(2+) as cofactor. Mg(2+) is required as a cofactor.

It is found in the cytoplasm. It carries out the reaction Endonucleolytic cleavage to 5'-phosphomonoester.. Its function is as follows. Endonuclease that specifically degrades the RNA of RNA-DNA hybrids. This is Ribonuclease HII from Xanthomonas oryzae pv. oryzae (strain KACC10331 / KXO85).